We begin with the raw amino-acid sequence, 113 residues long: ATP-dependent Clp protease adapter protein ClpS (113 aa).

The disordered stretch occupies residues 1–26 (MLMQPLMMSDNPDDESDLGLLTKTRP).

Belongs to the ClpS family. Binds to the N-terminal domain of the chaperone ClpA.

Its function is as follows. Involved in the modulation of the specificity of the ClpAP-mediated ATP-dependent protein degradation. The polypeptide is ATP-dependent Clp protease adapter protein ClpS (Ruegeria sp. (strain TM1040) (Silicibacter sp.)).